Here is a 179-residue protein sequence, read N- to C-terminus: Peptidyl-tRNA hydrolase (179 aa).

Residue tyrosine 15 coordinates tRNA. Histidine 20 serves as the catalytic Proton acceptor. Tyrosine 66, asparagine 68, and asparagine 114 together coordinate tRNA.

The protein belongs to the PTH family. Monomer.

The protein resides in the cytoplasm. It catalyses the reaction an N-acyl-L-alpha-aminoacyl-tRNA + H2O = an N-acyl-L-amino acid + a tRNA + H(+). Its function is as follows. Hydrolyzes ribosome-free peptidyl-tRNAs (with 1 or more amino acids incorporated), which drop off the ribosome during protein synthesis, or as a result of ribosome stalling. Catalyzes the release of premature peptidyl moieties from peptidyl-tRNA molecules trapped in stalled 50S ribosomal subunits, and thus maintains levels of free tRNAs and 50S ribosomes. In Chlamydia muridarum (strain MoPn / Nigg), this protein is Peptidyl-tRNA hydrolase.